Here is a 930-residue protein sequence, read N- to C-terminus: Isoleucine--tRNA ligase (930 aa).

The short motif at 57 to 67 (PYANGNIHVGH) is the 'HIGH' region element. E554 is an L-isoleucyl-5'-AMP binding site. A 'KMSKS' region motif is present at residues 595-599 (KMSKS). K598 contacts ATP. Positions 888, 891, 908, and 911 each coordinate Zn(2+).

This sequence belongs to the class-I aminoacyl-tRNA synthetase family. IleS type 1 subfamily. In terms of assembly, monomer. Zn(2+) is required as a cofactor.

The protein resides in the cytoplasm. It carries out the reaction tRNA(Ile) + L-isoleucine + ATP = L-isoleucyl-tRNA(Ile) + AMP + diphosphate. Its function is as follows. Catalyzes the attachment of isoleucine to tRNA(Ile). As IleRS can inadvertently accommodate and process structurally similar amino acids such as valine, to avoid such errors it has two additional distinct tRNA(Ile)-dependent editing activities. One activity is designated as 'pretransfer' editing and involves the hydrolysis of activated Val-AMP. The other activity is designated 'posttransfer' editing and involves deacylation of mischarged Val-tRNA(Ile). The protein is Isoleucine--tRNA ligase of Streptococcus pneumoniae (strain ATCC BAA-255 / R6).